The sequence spans 244 residues: Small ribosomal subunit protein eS4 (244 aa).

The region spanning L43–E106 is the S4 RNA-binding domain.

This sequence belongs to the eukaryotic ribosomal protein eS4 family.

The polypeptide is Small ribosomal subunit protein eS4 (Methanococcus maripaludis (strain C6 / ATCC BAA-1332)).